Reading from the N-terminus, the 217-residue chain is Large ribosomal subunit protein uL3 (217 aa).

This sequence belongs to the universal ribosomal protein uL3 family. Part of the 50S ribosomal subunit. Forms a cluster with proteins L14 and L19.

Its function is as follows. One of the primary rRNA binding proteins, it binds directly near the 3'-end of the 23S rRNA, where it nucleates assembly of the 50S subunit. The polypeptide is Large ribosomal subunit protein uL3 (Mycobacterium leprae (strain TN)).